The chain runs to 376 residues: Queuine tRNA-ribosyltransferase (376 aa).

The active-site Proton acceptor is D93. Substrate-binding positions include 93 to 97 (DSGGF), D147, Q191, and G218. The RNA binding stretch occupies residues 249-255 (GVGKPED). D268 serves as the catalytic Nucleophile. The RNA binding; important for wobble base 34 recognition stretch occupies residues 273–277 (TRNAR). Zn(2+) is bound by residues C306, C308, C311, and H337.

It belongs to the queuine tRNA-ribosyltransferase family. In terms of assembly, homodimer. Within each dimer, one monomer is responsible for RNA recognition and catalysis, while the other monomer binds to the replacement base PreQ1. Zn(2+) is required as a cofactor.

The enzyme catalyses 7-aminomethyl-7-carbaguanine + guanosine(34) in tRNA = 7-aminomethyl-7-carbaguanosine(34) in tRNA + guanine. It functions in the pathway tRNA modification; tRNA-queuosine biosynthesis. Functionally, catalyzes the base-exchange of a guanine (G) residue with the queuine precursor 7-aminomethyl-7-deazaguanine (PreQ1) at position 34 (anticodon wobble position) in tRNAs with GU(N) anticodons (tRNA-Asp, -Asn, -His and -Tyr). Catalysis occurs through a double-displacement mechanism. The nucleophile active site attacks the C1' of nucleotide 34 to detach the guanine base from the RNA, forming a covalent enzyme-RNA intermediate. The proton acceptor active site deprotonates the incoming PreQ1, allowing a nucleophilic attack on the C1' of the ribose to form the product. After dissociation, two additional enzymatic reactions on the tRNA convert PreQ1 to queuine (Q), resulting in the hypermodified nucleoside queuosine (7-(((4,5-cis-dihydroxy-2-cyclopenten-1-yl)amino)methyl)-7-deazaguanosine). In Histophilus somni (strain 129Pt) (Haemophilus somnus), this protein is Queuine tRNA-ribosyltransferase.